Reading from the N-terminus, the 490-residue chain is MERKFSEQEQVRRDKVTALEKQNIRAFSQTIKPTHTSEEIHANFANKEREDIEKTNTIAVLNGRVIAQRGPFLVLQGRSSTLQIYVDKKALNEETLIILKQLDLGDIISATGLVSKTHTGELMIKASDIKLLTKSLIPLPDKFHGLVDREDRYRHRYVDTIVNEDVKKTFILRSKIIKLIREYFDNLNFLEVDTPVLQPILGGAAAKPFITYYNALNCNFYLRIATELPLKKLIVGGFERVYEIGRIFRNEGIDTTHNPEFTSIEFYEAYSDMWGMMERTEGVFRYIAEKLNVQKLNFAGKEIDITKPFAKINMVDAVSEKIGVNVRELDDKKALELAKQHDIKVEKYFKLGHVIEALFEKYIEETLIQPTFVYGHPLDISPLAFKDESDPRFTQRAELFICTKEFANMYTELNDPFDQLQRFEAQLDEKNAGNEEANEIDWDFVKALEYGMPPTGGCGIGIERLIMFFTENDSIREVLLFPQLKAVSQK.

Mg(2+) contacts are provided by Glu398 and Glu405.

This sequence belongs to the class-II aminoacyl-tRNA synthetase family. In terms of assembly, homodimer. Mg(2+) serves as cofactor.

The protein resides in the cytoplasm. The catalysed reaction is tRNA(Lys) + L-lysine + ATP = L-lysyl-tRNA(Lys) + AMP + diphosphate. The sequence is that of Lysine--tRNA ligase from Metamycoplasma arthritidis (strain 158L3-1) (Mycoplasma arthritidis).